A 204-amino-acid chain; its full sequence is Small rubber particle protein (204 aa).

It belongs to the REF/SRPP family. In terms of assembly, auto-assembles in solution into stable nanomultimers of a globular nature. Not glycosylated. In terms of processing, the N-terminus is blocked. Post-translationally, consistent shifts of about 266 Da observed by MS in various forms of the intact protein suggest the addition of stearolyl groups. As to expression, highly expressed in the specialized vessel laticifers, but localized only in the laticifer layers in the conducting phloem. Also detected in leaves.

The protein localises to the cytoplasm. Functionally, involved in the biosynthesis of rubber, an isoprenoid polymer (cis-1,4-polyisoprene). This chain is Small rubber particle protein, found in Hevea brasiliensis (Para rubber tree).